Here is a 366-residue protein sequence, read N- to C-terminus: Holliday junction branch migration complex subunit RuvB (366 aa).

Residues 1–48 are disordered; that stretch reads MIDRLMAREAIYQQSNPDPGGDPPEDGPPHGKNAADGGDEPDRGPDPD. A large ATPase domain (RuvB-L) region spans residues 21 to 212; sequence GDPPEDGPPH…FQIREHLGWY (192 aa). ATP-binding positions include L51, R52, G93, K96, T97, T98, 159–161, R202, Y212, and R249; that span reads EDF. Mg(2+) is bound at residue T97. A small ATPAse domain (RuvB-S) region spans residues 213 to 283; the sequence is TRKELAEIVL…VCEAALDMIG (71 aa). The head domain (RuvB-H) stretch occupies residues 286 to 366; it reads HLGLDKQDRN…KRQMPDRPLS (81 aa). Residues R341, R343, and R346 each contribute to the DNA site.

The protein belongs to the RuvB family. In terms of assembly, homohexamer. Forms an RuvA(8)-RuvB(12)-Holliday junction (HJ) complex. HJ DNA is sandwiched between 2 RuvA tetramers; dsDNA enters through RuvA and exits via RuvB. An RuvB hexamer assembles on each DNA strand where it exits the tetramer. Each RuvB hexamer is contacted by two RuvA subunits (via domain III) on 2 adjacent RuvB subunits; this complex drives branch migration. In the full resolvosome a probable DNA-RuvA(4)-RuvB(12)-RuvC(2) complex forms which resolves the HJ.

It is found in the cytoplasm. The enzyme catalyses ATP + H2O = ADP + phosphate + H(+). The RuvA-RuvB-RuvC complex processes Holliday junction (HJ) DNA during genetic recombination and DNA repair, while the RuvA-RuvB complex plays an important role in the rescue of blocked DNA replication forks via replication fork reversal (RFR). RuvA specifically binds to HJ cruciform DNA, conferring on it an open structure. The RuvB hexamer acts as an ATP-dependent pump, pulling dsDNA into and through the RuvAB complex. RuvB forms 2 homohexamers on either side of HJ DNA bound by 1 or 2 RuvA tetramers; 4 subunits per hexamer contact DNA at a time. Coordinated motions by a converter formed by DNA-disengaged RuvB subunits stimulates ATP hydrolysis and nucleotide exchange. Immobilization of the converter enables RuvB to convert the ATP-contained energy into a lever motion, pulling 2 nucleotides of DNA out of the RuvA tetramer per ATP hydrolyzed, thus driving DNA branch migration. The RuvB motors rotate together with the DNA substrate, which together with the progressing nucleotide cycle form the mechanistic basis for DNA recombination by continuous HJ branch migration. Branch migration allows RuvC to scan DNA until it finds its consensus sequence, where it cleaves and resolves cruciform DNA. In Rhodopirellula baltica (strain DSM 10527 / NCIMB 13988 / SH1), this protein is Holliday junction branch migration complex subunit RuvB.